Consider the following 71-residue polypeptide: Long neurotoxin 2 (71 aa).

Intrachain disulfides connect cysteine 3/cysteine 20, cysteine 14/cysteine 41, cysteine 26/cysteine 30, cysteine 45/cysteine 56, and cysteine 57/cysteine 62.

It belongs to the three-finger toxin family. Long-chain subfamily. Type II alpha-neurotoxin sub-subfamily. Expressed by the venom gland.

The protein localises to the secreted. Binds with high affinity to muscular (alpha-1/CHRNA1) and neuronal (alpha-7/CHRNA7) nicotinic acetylcholine receptor (nAChR) and inhibits acetylcholine from binding to the receptor, thereby impairing neuromuscular and neuronal transmission. This chain is Long neurotoxin 2, found in Naja naja (Indian cobra).